Consider the following 304-residue polypeptide: Acetylglutamate kinase (304 aa).

Substrate-binding positions include 82–83 (GG), Arg104, and Asn197.

Belongs to the acetylglutamate kinase family. ArgB subfamily.

The protein localises to the cytoplasm. It catalyses the reaction N-acetyl-L-glutamate + ATP = N-acetyl-L-glutamyl 5-phosphate + ADP. The protein operates within amino-acid biosynthesis; L-arginine biosynthesis; N(2)-acetyl-L-ornithine from L-glutamate: step 2/4. Catalyzes the ATP-dependent phosphorylation of N-acetyl-L-glutamate. This Prochlorococcus marinus (strain NATL1A) protein is Acetylglutamate kinase.